Reading from the N-terminus, the 451-residue chain is Glyceraldehyde-3-phosphate dehydrogenase B, chloroplastic (451 aa).

The segment at 1 to 25 (MATHAALASTRIPTNTRFPSKTSHS) is disordered. The transit peptide at 1 to 84 (MATHAALAST…STAVKGVTVA (84 aa)) directs the protein to the chloroplast. Residues 11 to 25 (RIPTNTRFPSKTSHS) are compositionally biased toward polar residues. NADP(+)-binding positions include 95–96 (RI), D119, and R164. Residues 238-240 (SCT), T269, R284, 297-298 (TG), and R320 each bind D-glyceraldehyde 3-phosphate. C239 serves as the catalytic Nucleophile. N403 contacts NADP(+).

The protein belongs to the glyceraldehyde-3-phosphate dehydrogenase family. Tetramer of either four A chains (GAPDH 2) or two A and two B chains (GAPDH 1).

It is found in the plastid. It localises to the chloroplast. It carries out the reaction D-glyceraldehyde 3-phosphate + phosphate + NADP(+) = (2R)-3-phospho-glyceroyl phosphate + NADPH + H(+). The protein operates within carbohydrate biosynthesis; Calvin cycle. In Pisum sativum (Garden pea), this protein is Glyceraldehyde-3-phosphate dehydrogenase B, chloroplastic (GAPB).